The primary structure comprises 56 residues: Large ribosomal subunit protein bL33 (56 aa).

Belongs to the bacterial ribosomal protein bL33 family.

The polypeptide is Large ribosomal subunit protein bL33 (Treponema denticola (strain ATCC 35405 / DSM 14222 / CIP 103919 / JCM 8153 / KCTC 15104)).